The following is a 656-amino-acid chain: Receptor-type tyrosine-protein phosphatase R (656 aa).

The N-terminal stretch at 1 to 23 (MRRAVGFPALCLLLNLHAAGCFS) is a signal peptide. O-linked (Xyl...) (chondroitin sulfate) serine glycosylation occurs at S23. Residues 25 to 225 (NNDHFLAIRQ…HEADKIWSKE (201 aa)) are Extracellular-facing. An N-linked (GlcNAc...) asparagine glycan is attached at N128. The chain crosses the membrane as a helical span at residues 226-248 (GFYAVVIFLSIFIIIVTCLMIIY). The Cytoplasmic portion of the chain corresponds to 249-656 (RLKERLQLSF…ESRLSPETVQ (408 aa)). At S271 the chain carries Phosphoserine. The residue at position 338 (S338) is a Phosphoserine; by PKA. Positions 392 to 646 (LQSEFMEIPM…EFVHHALCLF (255 aa)) constitute a Tyrosine-protein phosphatase domain. Residues D553, 587-593 (CSAGIGR), and Q631 each bind substrate. C587 (phosphocysteine intermediate) is an active-site residue.

It belongs to the protein-tyrosine phosphatase family. Receptor class 7 subfamily. As to quaternary structure, interacts with MAPKs. In terms of tissue distribution, widely expressed in the brain, most abundant in cerebellum, midbrain, cerebral cortex and hippocampus. Also expressed in heart and skeletal muscle.

Its subcellular location is the cytoplasm. It localises to the cell membrane. It catalyses the reaction O-phospho-L-tyrosyl-[protein] + H2O = L-tyrosyl-[protein] + phosphate. Functionally, sequesters mitogen-activated protein kinases (MAPKs) such as MAPK1, MAPK3 and MAPK14 in the cytoplasm in an inactive form. The MAPKs bind to a dephosphorylated kinase interacting motif, phosphorylation of which by the protein kinase A complex releases the MAPKs for activation and translocation into the nucleus. The chain is Receptor-type tyrosine-protein phosphatase R (Ptprr) from Rattus norvegicus (Rat).